The chain runs to 576 residues: SNF1-like protein kinase ssp2 (576 aa).

The Protein kinase domain occupies tyrosine 34–phenylalanine 285. Residues leucine 40–valine 48 and lysine 63 contribute to the ATP site. Aspartate 156 serves as the catalytic Proton acceptor. Threonine 189 bears the Phosphothreonine mark. Positions tyrosine 292–isoleucine 348 are auto-inhibitory domain (AID). In terms of domain architecture, UBA spans alanine 304–asparagine 345. The residue at position 442 (serine 442) is a Phosphoserine.

The protein belongs to the protein kinase superfamily. CAMK Ser/Thr protein kinase family. SNF1 subfamily. As to quaternary structure, component of the AMP-activated protein kinase complex also known as the SNF1 kinase complex (Snf1c), a heterotrimeric complex composed of a catalytic subunit alpha and 2 regulatory subunits beta (amk2) and gamma (cbs2). In terms of processing, phosphorylation at Thr-189 by ssp1 is required for nuclear entry in nutritionally stressed cells.

It is found in the cytoplasm. The protein resides in the nucleus. It catalyses the reaction L-seryl-[protein] + ATP = O-phospho-L-seryl-[protein] + ADP + H(+). The enzyme catalyses L-threonyl-[protein] + ATP = O-phospho-L-threonyl-[protein] + ADP + H(+). Its function is as follows. Serine/threonine protein kinase essential for release from glucose repression via the phosphorylation of scr1 upon glucose deprivation. Catalytic subunit of the AMP-activated protein kinase complex also known as the SNF1 kinase complex (Snf1c), a central regulator of cellular energy homeostasis, which, in response to a fall in intracellular ATP levels, activates energy-producing pathways and inhibits energy-consuming processes. The complex phosphorylates histone H3 to form H3S10ph, which promotes H3K14ac formation, leading to transcriptional activation through TBP recruitment to the promoters. Regulates proper cell cycle exit and sexual differentiation. Also regulates ste11 levels under nitrogen deprivation. The polypeptide is SNF1-like protein kinase ssp2 (Schizosaccharomyces pombe (strain 972 / ATCC 24843) (Fission yeast)).